The primary structure comprises 350 residues: Blue-sensitive opsin (350 aa).

Residues 1–36 lie on the Extracellular side of the membrane; sequence MNGTEGPNFYVPMSNATGVVRSPFEYPQYYLAEPWA. N-linked (GlcNAc...) asparagine glycosylation is found at Asn-2 and Asn-15. Residues 37–61 traverse the membrane as a helical segment; the sequence is FSILAAYMFFLIITGFPINFLTLYV. Residues 62 to 73 are Cytoplasmic-facing; it reads TIEHKKLRTPLN. Residues 74-98 traverse the membrane as a helical segment; it reads YILLNLAVADLFMVFGGFTTTMYTS. Topologically, residues 99 to 113 are extracellular; the sequence is MHGYFVFGETGCNLE. Cys-110 and Cys-187 are joined by a disulfide. A helical membrane pass occupies residues 114–133; that stretch reads GYFATLGGEISLWSLVVLAI. At 134 to 152 the chain is on the cytoplasmic side; that stretch reads ERWVVVCKPISNFRFGENH. The helical transmembrane segment at 153-176 threads the bilayer; it reads AIMGLTLTWVMANACAMPPLFGWS. Residues 177 to 202 lie on the Extracellular side of the membrane; the sequence is RYIPEGLQCSCGIDYYTLKPEVNNES. The N-linked (GlcNAc...) asparagine glycan is linked to Asn-200. Residues 203–230 form a helical membrane-spanning segment; sequence FVIYMFLVHFTIPLTIISFCYGRLVCAV. The Cytoplasmic segment spans residues 231–252; the sequence is KEAAAQQQESETTQRAEREVTR. The chain crosses the membrane as a helical span at residues 253–276; sequence MVVIMVISFLVCWIPYASVAWYIF. At 277–284 the chain is on the extracellular side; it reads THQGSTFG. A helical membrane pass occupies residues 285–309; it reads PIFMTVPSFFAKSSSIYNPMIYICM. Lys-296 is subject to N6-(retinylidene)lysine. The Cytoplasmic portion of the chain corresponds to 310–350; it reads NKQFRNCMITTLFCGKNPFEGEEEGSTTKTEASAVSSVSPA. The segment at 330 to 350 is disordered; sequence GEEEGSTTKTEASAVSSVSPA.

This sequence belongs to the G-protein coupled receptor 1 family. Opsin subfamily. In terms of processing, phosphorylated on some or all of the serine and threonine residues present in the C-terminal region. Rod shaped photoreceptor cells which mediates vision in dim light.

The protein resides in the membrane. Its function is as follows. Visual pigments are the light-absorbing molecules that mediate vision. They consist of an apoprotein, opsin, covalently linked to cis-retinal. The sequence is that of Blue-sensitive opsin from Conger conger (Conger eel).